The primary structure comprises 99 residues: Malonate decarboxylase acyl carrier protein (99 aa).

O-(phosphoribosyl dephospho-coenzyme A)serine is present on Ser-25.

The protein belongs to the MdcC family. In terms of processing, covalently binds the prosthetic group of malonate decarboxylase.

It is found in the cytoplasm. In terms of biological role, subunit of malonate decarboxylase, it is an acyl carrier protein to which acetyl and malonyl thioester residues are bound via a 2'-(5''-phosphoribosyl)-3'-dephospho-CoA prosthetic group and turn over during the catalytic mechanism. The polypeptide is Malonate decarboxylase acyl carrier protein (Pseudomonas fluorescens (strain SBW25)).